Consider the following 188-residue polypeptide: dCTP deaminase (188 aa).

DCTP contacts are provided by residues 111-116 (KSTYAR), 135-137 (TLE), Gln156, Tyr170, and Gln180. Glu137 serves as the catalytic Proton donor/acceptor.

It belongs to the dCTP deaminase family. Homotrimer.

It carries out the reaction dCTP + H2O + H(+) = dUTP + NH4(+). Its pathway is pyrimidine metabolism; dUMP biosynthesis; dUMP from dCTP (dUTP route): step 1/2. Its function is as follows. Catalyzes the deamination of dCTP to dUTP. The protein is dCTP deaminase of Paracidovorax citrulli (strain AAC00-1) (Acidovorax citrulli).